The sequence spans 122 residues: Holo-[acyl-carrier-protein] synthase (122 aa).

2 residues coordinate Mg(2+): D8 and E56.

Belongs to the P-Pant transferase superfamily. AcpS family. Requires Mg(2+) as cofactor.

It localises to the cytoplasm. The catalysed reaction is apo-[ACP] + CoA = holo-[ACP] + adenosine 3',5'-bisphosphate + H(+). Its function is as follows. Transfers the 4'-phosphopantetheine moiety from coenzyme A to a Ser of acyl-carrier-protein. In Salinispora arenicola (strain CNS-205), this protein is Holo-[acyl-carrier-protein] synthase.